Here is a 198-residue protein sequence, read N- to C-terminus: HTH-type transcriptional regulator BetI (198 aa).

In terms of domain architecture, HTH tetR-type spans 8 to 68 (PIRRQQLIDA…ATMRYLISHL (61 aa)). Positions 31–50 (TIAQIARRAGVSNGIISHYF) form a DNA-binding region, H-T-H motif.

It functions in the pathway amine and polyamine biosynthesis; betaine biosynthesis via choline pathway [regulation]. Its function is as follows. Repressor involved in the biosynthesis of the osmoprotectant glycine betaine. It represses transcription of the choline transporter BetT and the genes of BetAB involved in the synthesis of glycine betaine. The sequence is that of HTH-type transcriptional regulator BetI from Serratia proteamaculans (strain 568).